The following is a 177-amino-acid chain: Adenine phosphoribosyltransferase (177 aa).

This sequence belongs to the purine/pyrimidine phosphoribosyltransferase family. As to quaternary structure, homodimer.

The protein localises to the cytoplasm. The catalysed reaction is AMP + diphosphate = 5-phospho-alpha-D-ribose 1-diphosphate + adenine. It participates in purine metabolism; AMP biosynthesis via salvage pathway; AMP from adenine: step 1/1. Catalyzes a salvage reaction resulting in the formation of AMP, that is energically less costly than de novo synthesis. The protein is Adenine phosphoribosyltransferase of Idiomarina loihiensis (strain ATCC BAA-735 / DSM 15497 / L2-TR).